Here is a 101-residue protein sequence, read N- to C-terminus: NAD(P)H-quinone oxidoreductase subunit 4L, chloroplastic (101 aa).

The next 3 membrane-spanning stretches (helical) occupy residues 2-22 (MTEH…YGLI), 32-52 (MCLE…SDLF), and 61-81 (IFSI…PAIV).

The protein belongs to the complex I subunit 4L family. NDH is composed of at least 16 different subunits, 5 of which are encoded in the nucleus.

It localises to the plastid. It is found in the chloroplast thylakoid membrane. It carries out the reaction a plastoquinone + NADH + (n+1) H(+)(in) = a plastoquinol + NAD(+) + n H(+)(out). It catalyses the reaction a plastoquinone + NADPH + (n+1) H(+)(in) = a plastoquinol + NADP(+) + n H(+)(out). Functionally, NDH shuttles electrons from NAD(P)H:plastoquinone, via FMN and iron-sulfur (Fe-S) centers, to quinones in the photosynthetic chain and possibly in a chloroplast respiratory chain. The immediate electron acceptor for the enzyme in this species is believed to be plastoquinone. Couples the redox reaction to proton translocation, and thus conserves the redox energy in a proton gradient. This is NAD(P)H-quinone oxidoreductase subunit 4L, chloroplastic from Liriodendron tulipifera (Tuliptree).